Here is a 155-residue protein sequence, read N- to C-terminus: SsrA-binding protein (155 aa).

It belongs to the SmpB family.

It is found in the cytoplasm. Its function is as follows. Required for rescue of stalled ribosomes mediated by trans-translation. Binds to transfer-messenger RNA (tmRNA), required for stable association of tmRNA with ribosomes. tmRNA and SmpB together mimic tRNA shape, replacing the anticodon stem-loop with SmpB. tmRNA is encoded by the ssrA gene; the 2 termini fold to resemble tRNA(Ala) and it encodes a 'tag peptide', a short internal open reading frame. During trans-translation Ala-aminoacylated tmRNA acts like a tRNA, entering the A-site of stalled ribosomes, displacing the stalled mRNA. The ribosome then switches to translate the ORF on the tmRNA; the nascent peptide is terminated with the 'tag peptide' encoded by the tmRNA and targeted for degradation. The ribosome is freed to recommence translation, which seems to be the essential function of trans-translation. In Streptococcus pyogenes serotype M18 (strain MGAS8232), this protein is SsrA-binding protein.